We begin with the raw amino-acid sequence, 324 residues long: Zinc finger C2HC domain-containing protein 1A (324 aa).

The segment at 15–44 adopts a C2HC/C3H-type 1 zinc-finger fold; that stretch reads ELLPCKICGRTFFPVALKKHGPICKKTATK. Residues cysteine 19, cysteine 22, histidine 34, and cysteine 38 each coordinate Zn(2+). The disordered stretch occupies residues 43–83; sequence TKKRKTFDSSRQRAEGTDIPTVKPLKPRPEPPKKPSNWRRK. A compositionally biased stretch (basic and acidic residues) spans 48–58; the sequence is TFDSSRQRAEG. Residues 118–147 form a C2HC/C3H-type 2 zinc finger; the sequence is DYIQCPYCQRRFNENAADRHINFCKEQAAR. Residues cysteine 122, cysteine 125, histidine 137, and cysteine 141 each contribute to the Zn(2+) site. Disordered regions lie at residues 150–224 and 236–259; these read NKGK…LSPS and NVKP…LTNK. Low complexity-rich tracts occupy residues 176-187 and 196-215; these read SNSPGTASSGSS and GKTV…SSLG. Serine 222 carries the phosphoserine modification. Threonine 243 carries the phosphothreonine modification. Serine 291 bears the Phosphoserine mark.

This sequence belongs to the ZC2HC1 family. Requires Zn(2+) as cofactor.

The chain is Zinc finger C2HC domain-containing protein 1A (ZC2HC1A) from Pongo abelii (Sumatran orangutan).